The chain runs to 75 residues: Rugosin-LK2 (75 aa).

An N-terminal signal peptide occupies residues 1–24 (MFTMKKSLLFLFFLGTISLSFCEG). Positions 25–40 (ERSADEDDEGEMTEEE) are excised as a propeptide.

Expressed by the skin glands.

It localises to the secreted. Has antimicrobial activity against Gram-positive bacteria S.aureus ATCC 2592 (MIC=10.0 uM), S.aureus ATCC 43300 (MIC=10.0 uM) and B.subtilis (MIC=30.0 uM), against Gram-negative bacteria E.coli ML-35P (MIC=10.0 uM), P.aeruginosa PA01 (MIC=2.5 uM) and P.aeruginosa ATCC 27853 (MIC=2.5 uM) and against fungus C.albicans ATCC 2002 (MIC=10.0 uM). This is Rugosin-LK2 from Limnonectes kuhlii (Kuhl's Creek frog).